We begin with the raw amino-acid sequence, 1167 residues long: PH and Rap-GAP domain-containing protein DDB_G0271806 (1167 aa).

2 consecutive PH domains span residues 35–140 and 165–257; these read NCVK…SSSL and HVYL…SRIP. The segment at 95–160 is disordered; that stretch reads GIDNNNCTNS…TNANTNNGLS (66 aa). A compositionally biased stretch (low complexity) spans 98–155; that stretch reads NNNCTNSNSNNNNNNSDLIHLSAPSLSSSTSSTISPISSSSSLTTTTTTTTTTTNANT. 3 disordered regions span residues 335 to 361, 376 to 400, and 645 to 734; these read SGGG…GGSL, WRFS…STQV, and YSRS…LEPE. Positions 340-351 are enriched in low complexity; the sequence is NNSSPSSLQSQQ. The span at 648 to 676 shows a compositional bias: polar residues; it reads SEPNLQSCLSSSPSTRETMVPSSPSSHQL. Residues 687 to 732 are compositionally biased toward low complexity; that stretch reads EQQLSSSSSSSSQQLQLQLQQQEQEQLLQEQPEAEQSQPEPQPQLE. Residues 950–1162 enclose the Rap-GAP domain; sequence LLSFEERQTT…RTRESLLNYY (213 aa).

This chain is PH and Rap-GAP domain-containing protein DDB_G0271806, found in Dictyostelium discoideum (Social amoeba).